Consider the following 2282-residue polypeptide: Zonadhesin (2282 aa).

2 MAM domains span residues 1 to 147 (MFFA…PCGE) and 150 to 315 (PQCV…TCHV). Topologically, residues 1-2235 (MFFATGRASA…VLLPPKPDTS (2235 aa)) are extracellular. Asn112 and Asn272 each carry an N-linked (GlcNAc...) asparagine glycan. Positions 315–498 (VPVPPVIPIK…STTTTPSPTT (184 aa)) are 26 X approximate heptapeptide repeats (mucin-like domain). The span at 333 to 356 (PTVPAEGTTEPPEGTIELPEGTTK) shows a compositional bias: low complexity. The tract at residues 333–495 (PTVPAEGTTE…TTLSTTTTPS (163 aa)) is disordered. Acidic residues predominate over residues 360 to 369 (ETTELPEEIT). Pro residues predominate over residues 379 to 398 (TEPPTVPTEPPTVPTEPPTV). Low complexity-rich tracts occupy residues 399–420 (PTEK…TSIP) and 427–495 (PTEK…TTPS). In terms of domain architecture, TIL 1 spans 501–550 (CPANAHYESCACPASCKHPKASCKPPCQPGCVCDPGLVFSNNSCIKASSC). 2 N-linked (GlcNAc...) asparagine glycosylation sites follow: Asn541 and Asn569. The VWFC 1 domain occupies 551 to 605 (PCLYNNNNYEPEAEWFSPNCTELCHCWPGGRIECQISQCKTHTKCQLKNGQYECQ). Residues 610–787 (ATCFVYGDPH…WAQDEDKECQ (178 aa)) form the VWFD 1 domain. Disulfide bonds link Cys612-Cys747 and Cys634-Cys786. A TIL 2 domain is found at 881-934 (CPPNSRYSLCTSPCPKTCHTGYVGMPCPEQCLEGCECNPGFILSGLECVPSAQC). The region spanning 935–990 (GCLDPSRGYFKVGEQWFKSDCKQLCICEGSNQIRCQPWKCGPHEVCSQQSGIYGCH) is the VWFC 2 domain. The region spanning 995–1176 (ATCSASGDPH…LEEGSETGCF (182 aa)) is the VWFD 2 domain. Disulfide bonds link Cys997-Cys1136 and Cys1019-Cys1175. N-linked (GlcNAc...) asparagine glycosylation is found at Asn1141, Asn1259, Asn1270, Asn1355, Asn1467, and Asn1483. In terms of domain architecture, TIL 3 spans 1267-1322 (CPPNSSYSPCGSPCPGTCLSLNHPKDCPITLPCVEGCECQNGYILSGTSCVPLNQC). A VWFC 3 domain is found at 1323 to 1379 (GCTDFEGSYHLVRESWYTDNTCSRLCTCSLHNNITCRQTACKPGQQCWAVDGLLRCR). The region spanning 1384–1564 (GVCQVTGDSR…KDNNIDPNCQ (181 aa)) is the VWFD 3 domain. Intrachain disulfides connect Cys1386/Cys1525 and Cys1408/Cys1563. The segment at 1561-1588 (PNCQKSQEGKGKPQEEQGPSGSSKKASC) is disordered. Residues 1577 to 1586 (QGPSGSSKKA) show a composition bias toward polar residues. An N-linked (GlcNAc...) asparagine glycan is attached at Asn1662. The TIL 4 domain maps to 1670 to 1726 (CPAYSTYTNCLPSCSPSCFDPDGRCEGARAPSSCAEGCTCQPGYVLSKNKCVAKDQC). A VWFC 4 domain is found at 1727–1782 (SCRDAQGGSIPSGKSWVSSGCSQKCACTEGSIQCRAFHCPSRSHCKLNSNGNSNCV). The VWFD 4 domain maps to 1787–1963 (DQCSIFGGPH…SWEVKTEDSV (177 aa)). A disulfide bridge connects residues Cys1789 and Cys1926. Asn1997 carries an N-linked (GlcNAc...) asparagine glycan. The 54-residue stretch at 2076–2129 (CPANTVYQSCMTPCPESCANLAAPRDCEGPCVEGCASLPGYAFSGAQSLPLANC) folds into the TIL 5 domain. The region spanning 2130–2184 (GCTSNGIYYQLGHSFVTADCSQRCTCASSGVLLCEPFSCRPGESCTLGNLTRGCF) is the VWFC 5 domain. N-linked (GlcNAc...) asparagine glycosylation occurs at Asn2178. An EGF-like domain is found at 2185-2221 (RESPCLRNPCQNDGRCREQGTSFTCECEPGYGGHLCT). 3 cysteine pairs are disulfide-bonded: Cys2189-Cys2200, Cys2194-Cys2209, and Cys2211-Cys2220. The chain crosses the membrane as a helical span at residues 2236–2256 (NLVAILLGMLVSLVVTVPVLA). Residues 2257–2282 (RKCVSRKRRRWREKTQSEPRSAPGRR) lie on the Cytoplasmic side of the membrane.

In terms of assembly, probably forms covalent oligomers.

The protein resides in the cell membrane. Its function is as follows. Binds in a species-specific manner to the zona pellucida of the egg. May be involved in gamete recognition and/or signaling. This Oryctolagus cuniculus (Rabbit) protein is Zonadhesin (ZAN).